A 469-amino-acid polypeptide reads, in one-letter code: Cysteine--tRNA ligase (469 aa).

C33 serves as a coordination point for Zn(2+). Positions 35–45 (ATVQGLPHIGH) match the 'HIGH' region motif. The Zn(2+) site is built by C211, H236, and E240. Positions 267 to 271 (KMSKS) match the 'KMSKS' region motif. An ATP-binding site is contributed by K270.

The protein belongs to the class-I aminoacyl-tRNA synthetase family. As to quaternary structure, monomer. Zn(2+) serves as cofactor.

The protein resides in the cytoplasm. It carries out the reaction tRNA(Cys) + L-cysteine + ATP = L-cysteinyl-tRNA(Cys) + AMP + diphosphate. This Mycobacterium bovis (strain ATCC BAA-935 / AF2122/97) protein is Cysteine--tRNA ligase (cysS).